The primary structure comprises 835 residues: Protein translocase subunit SecA (835 aa).

ATP is bound by residues Gln-85, Gly-103 to Thr-107, and Asp-495. The segment at Lys-806–Asn-835 is disordered. Positions Lys-820–Asn-835 are enriched in basic residues.

This sequence belongs to the SecA family. As to quaternary structure, monomer and homodimer. Part of the essential Sec protein translocation apparatus which comprises SecA, SecYEG and auxiliary proteins SecDF. Other proteins may also be involved.

The protein resides in the cell membrane. It is found in the cytoplasm. The enzyme catalyses ATP + H2O + cellular proteinSide 1 = ADP + phosphate + cellular proteinSide 2.. Its function is as follows. Part of the Sec protein translocase complex. Interacts with the SecYEG preprotein conducting channel. Has a central role in coupling the hydrolysis of ATP to the transfer of proteins into and across the cell membrane, serving as an ATP-driven molecular motor driving the stepwise translocation of polypeptide chains across the membrane. The sequence is that of Protein translocase subunit SecA from Onion yellows phytoplasma (strain OY-M).